The following is a 180-amino-acid chain: Inorganic pyrophosphatase (180 aa).

Substrate is bound by residues lysine 30, arginine 44, and tyrosine 56. Residues aspartate 66, aspartate 71, and aspartate 103 each contribute to the Mg(2+) site. Residue tyrosine 142 coordinates substrate.

It belongs to the PPase family. As to quaternary structure, homohexamer. Requires Mg(2+) as cofactor.

The protein localises to the cytoplasm. It carries out the reaction diphosphate + H2O = 2 phosphate + H(+). In terms of biological role, catalyzes the hydrolysis of inorganic pyrophosphate (PPi) forming two phosphate ions. The chain is Inorganic pyrophosphatase from Buchnera aphidicola subsp. Schizaphis graminum (strain Sg).